A 362-amino-acid polypeptide reads, in one-letter code: NAD(P)H-quinone oxidoreductase subunit 1, chloroplastic (362 aa).

The next 7 membrane-spanning stretches (helical) occupy residues 26 to 48, 97 to 119, 126 to 148, 163 to 185, 254 to 276, 296 to 318, and 338 to 360; these read LIWILPIFALLLGITIEVLVIVW, FSIGPSIAVISILLSFLVIPLGY, LSIGVFLWIAISSIAPIGLLMAG, AAAQSISYEIPLTFCVLAISLLS, LFYLVSYLNLLVSSLFVTVLYLG, IIGILEMVIGIFITLTKAYLFLF, and LGWKFLLPISLGNLLLTTSFQLV.

It belongs to the complex I subunit 1 family. In terms of assembly, NDH is composed of at least 16 different subunits, 5 of which are encoded in the nucleus.

The protein resides in the plastid. It is found in the chloroplast thylakoid membrane. It catalyses the reaction a plastoquinone + NADH + (n+1) H(+)(in) = a plastoquinol + NAD(+) + n H(+)(out). The catalysed reaction is a plastoquinone + NADPH + (n+1) H(+)(in) = a plastoquinol + NADP(+) + n H(+)(out). Its function is as follows. NDH shuttles electrons from NAD(P)H:plastoquinone, via FMN and iron-sulfur (Fe-S) centers, to quinones in the photosynthetic chain and possibly in a chloroplast respiratory chain. The immediate electron acceptor for the enzyme in this species is believed to be plastoquinone. Couples the redox reaction to proton translocation, and thus conserves the redox energy in a proton gradient. This chain is NAD(P)H-quinone oxidoreductase subunit 1, chloroplastic (ndhA), found in Zea mays (Maize).